The sequence spans 335 residues: Gibberellin 2-beta-dioxygenase 3 (335 aa).

Positions glutamate 175 to proline 278 constitute a Fe2OG dioxygenase domain. Residues histidine 202, aspartate 204, and histidine 259 each coordinate Fe cation. The active site involves arginine 269.

The protein belongs to the iron/ascorbate-dependent oxidoreductase family. GA2OX subfamily. It depends on Fe(2+) as a cofactor. Not expressed in the apex.

The catalysed reaction is gibberellin A1 + 2-oxoglutarate + O2 = gibberellin A8 + succinate + CO2. It functions in the pathway plant hormone biosynthesis; gibberellin biosynthesis. Its function is as follows. Catalyzes the 2-beta-hydroxylation of several biologically active gibberellins, leading to the homeostatic regulation of their endogenous level. Catabolism of gibberellins (GAs) plays a central role in plant development. Converts GA9/GA20 to GA51/GA29 and GA4/GA1 to GA34/GA8. The protein is Gibberellin 2-beta-dioxygenase 3 (GA2OX3) of Arabidopsis thaliana (Mouse-ear cress).